A 526-amino-acid polypeptide reads, in one-letter code: Maturase K (526 aa).

This sequence belongs to the intron maturase 2 family. MatK subfamily.

It localises to the plastid. It is found in the chloroplast. In terms of biological role, usually encoded in the trnK tRNA gene intron. Probably assists in splicing its own and other chloroplast group II introns. This is Maturase K from Iris setosa (Hiougi-ayame).